Here is a 405-residue protein sequence, read N- to C-terminus: L-carnitine CoA-transferase (405 aa).

CoA is bound by residues K97 and R104. The active-site Nucleophile is D169.

This sequence belongs to the CoA-transferase III family. CaiB subfamily. As to quaternary structure, homodimer.

The protein resides in the cytoplasm. The enzyme catalyses crotonobetainyl-CoA + (R)-carnitine = crotonobetaine + (R)-carnitinyl-CoA. It carries out the reaction 4-(trimethylamino)butanoyl-CoA + (R)-carnitine = (R)-carnitinyl-CoA + 4-(trimethylamino)butanoate. It functions in the pathway amine and polyamine metabolism; carnitine metabolism. Its function is as follows. Catalyzes the reversible transfer of the CoA moiety from gamma-butyrobetainyl-CoA to L-carnitine to generate L-carnitinyl-CoA and gamma-butyrobetaine. Is also able to catalyze the reversible transfer of the CoA moiety from gamma-butyrobetainyl-CoA or L-carnitinyl-CoA to crotonobetaine to generate crotonobetainyl-CoA. This is L-carnitine CoA-transferase from Escherichia coli O127:H6 (strain E2348/69 / EPEC).